The sequence spans 257 residues: MTIQRLKSTDPVSIEGWSWQPFLEDAIKSLGGLNFEPYPVPDRFLQREDQTGSKSKPISVTTATWACKTEKFRQVRAACVSAGSAASVLNFVINPNSTYDLPFFGGDLVTLPSGHLLALDLQPAIKTDEVHTTHVWDQLIPIFERWRDQLPYGGPIPEEAQPFFSPGFLWTRLPLGEEGDDLIQSVVRPAFNEYLELYLQLAASAERVNAERSDFLLQGQRKYTDYRAEKDPARGMLTRFHGSEWTEAYIHTVLFDL.

This sequence belongs to the HY2 family.

The catalysed reaction is (3Z)-phycoerythrobilin + oxidized 2[4Fe-4S]-[ferredoxin] = 15,16-dihydrobiliverdin + reduced 2[4Fe-4S]-[ferredoxin] + 2 H(+). Its function is as follows. Catalyzes the two-electron reduction of the C2 and C3(1) diene system of 15,16-dihydrobiliverdin. The protein is Phycoerythrobilin:ferredoxin oxidoreductase of Synechococcus sp. (strain CC9311).